Reading from the N-terminus, the 252-residue chain is Adaptation to cold protein B (252 aa).

As to quaternary structure, interacts with AtcC, but not with AtcA and AtcJ. Interacts with the RNA polymerase subunits RpoB and RpoC.

Its function is as follows. Involved in cold adaptation. Directly interacts with the RNA polymerase and decreases its activity. May direct the DnaK chaperone to the RNA polymerase to sustain life at low temperatures. Overproduction prevents bacterial growth due to RNA polymerase inhibition. The sequence is that of Adaptation to cold protein B from Shewanella oneidensis (strain ATCC 700550 / JCM 31522 / CIP 106686 / LMG 19005 / NCIMB 14063 / MR-1).